The sequence spans 432 residues: MTRTSEFKIAIIGAGPAGLTLASLLTASPHPFNFTVFELRQRPHPSEVNLPCGNLDLQEGLGLQAIQACGLYPQFLEIESDCTQQSKVLDKNGKVLFDHVTQGQPEISRNALTQLLLSSVPVDRIRWNTKVLAVTAADHSSGQGTVVSQETTASTSTSETFDLIVGADGAWSRVRAVIPSAPQPVYSGVCYITLYLPRLTEEYHELDQLIGGGTLAICGDGKLLLAQRTVRGTARVCLFLHSKCQPAVQRALQSSGHDDRVGPNSILDANSLLSTLPTRPEDLRELLLTNDDYFASWSDDIKHLLMVTLKEQPADAEIVAHPMHMLPLAPYPHTHMRGIVMVGDAAHLMTPFAGKGVNVAMADSLSLAEQLEYLAVGRSSTMSFQDALDEALVGYEEVAHPRAKKAMKLTWHNLLLSYSDNGAEQIGNVLES.

A helical transmembrane segment spans residues 7–29 (FKIAIIGAGPAGLTLASLLTASP). Asn33 carries N-linked (GlcNAc...) asparagine glycosylation.

It belongs to the aromatic-ring hydroxylase family. FAD is required as a cofactor.

The protein resides in the membrane. It functions in the pathway secondary metabolite biosynthesis. Its pathway is alkaloid biosynthesis. The protein operates within mycotoxin biosynthesis. Functionally, monooxygenase; part of the gene cluster that mediates the biosynthesis of penigequinolones, potent insecticidal alkaloids that contain a highly modified 10-carbon prenyl group. The first stage is catalyzed by the nonribosomal peptide synthetase penN that condenses anthranilic acid and O-methyl-L-tyrosine to produce 4'-methoxycyclopeptin. 4'-methoxycyclopeptin is then converted to 4'-methoxydehydrocyclopeptin by the ketoglutarate-dependent dioxygenase penM through dehydrogenation to form a double bond between C-alpha and C-beta of the O-methyltyrosine side chain. PenM also converts its first product methoxydehydrocyclopeptin to 4'-methoxycyclopenin. The following conversion of 4'methoxycyclopenin into 4'-methoxyviridicatin is catalyzed by the cyclopenase penL. 4'-methoxyviridicatin is the precursor of quinolone natural products, and is further converted to quinolinone B. The prenyltransferase penI then catalyzes the canonical Friedel-Crafts alkylation of quinolinone B with dimethylallyl cation to yield dimethylallyl quinolone, which is subjected to FAD-dependent dehydrogenation by the FAD-linked oxidoreductase penH to yield conjugated aryl diene. The delta(3') double bond then serves as the site of the second alkylation with DMAPP catalyzed by the prenyltransferase penG to yield a carbenium ion intermediate, which can be attacked by H(2)O to yield a styrenyl quinolone containing a C3'-hydroxyprenyl chain, or undergo cyclization to yield yaequinolones J1 and J2. The conversion of the styrenyl quinolone into the tetrahydrofuran-containing yaequinolone C is performed by the FAD-dependent monooxygenase penE and involves epoxidation of the terminal C7'-C8' olefin, followed by epoxide ring opening initiated by the C3' hydroxyl group. The predicted cysteine hydrolase penJ acts as an epoxide hydrolase that enhances the rate of the 5-exo-tet cyclization step, increasing the yield of yaequinolone C. PenF catalyzes the cationic rearrangement of the epoxide formed by penE (before ring opening to produce yaequinolone C) into yaequinolone D. Finally, the short-chain dehydrogenase/reductase (SDR)-like reductase penD, catalyzes both the dehydration of yaequinolone D and the reduction of the resulting oxonium to yield penigequinolone. This is Monooxygenase penA from Penicillium thymicola.